The sequence spans 306 residues: Oxygen-dependent coproporphyrinogen-III oxidase (306 aa).

Residue serine 94 participates in substrate binding. Positions 98 and 108 each coordinate a divalent metal cation. Residue histidine 108 is the Proton donor of the active site. Position 110–112 (110–112 (NVR)) interacts with substrate. 2 residues coordinate a divalent metal cation: histidine 147 and histidine 177. Positions 242-277 (YVEFNLVYDRGTLFGLQTGGRTESILMSMPPLVRWQ) are important for dimerization. 260-262 (GGR) serves as a coordination point for substrate.

Belongs to the aerobic coproporphyrinogen-III oxidase family. As to quaternary structure, homodimer. It depends on a divalent metal cation as a cofactor.

The protein localises to the cytoplasm. The enzyme catalyses coproporphyrinogen III + O2 + 2 H(+) = protoporphyrinogen IX + 2 CO2 + 2 H2O. It functions in the pathway porphyrin-containing compound metabolism; protoporphyrin-IX biosynthesis; protoporphyrinogen-IX from coproporphyrinogen-III (O2 route): step 1/1. Its function is as follows. Involved in the heme biosynthesis. Catalyzes the aerobic oxidative decarboxylation of propionate groups of rings A and B of coproporphyrinogen-III to yield the vinyl groups in protoporphyrinogen-IX. The sequence is that of Oxygen-dependent coproporphyrinogen-III oxidase from Shewanella sediminis (strain HAW-EB3).